The sequence spans 98 residues: MPLKPEEHEDILNKLLDPELAQSERTEALQQLRVNYGSFVSEYNDLTKSHEKLAAEKDDLIVSNSKLFRQIGLTDKQEEDHKKADISETITIEDLEAK.

The stretch at 40 to 62 forms a coiled coil; the sequence is VSEYNDLTKSHEKLAAEKDDLIV.

The protein belongs to the phi29likevirus scaffolding protein family. As to quaternary structure, homodimer. Interacts non-specifically with DNA; probably binds DNA in the early stages of DNA packaging.

Its function is as follows. Scaffolding protein involved in the icosahedric procapsid assembly. Coassembles with the capsid proteins to form the procapsid. The scaffolding protein is found within the capsid as a serie of concentric shells. During DNA packaging, the scaffolding protein molecules are released from the procapsid. The sequence is that of Capsid assembly scaffolding protein (7) from Bacillus subtilis (Bacteriophage phi-29).